The chain runs to 188 residues: uncharacterized protein (188 aa).

Positions 62–77 (ITGEKPLIKLNESTEK) match the L5-specific motif motif.

The protein localises to the mitochondrion. This is an uncharacterized protein from Dictyostelium discoideum (Social amoeba).